The following is a 314-amino-acid chain: DNA-directed RNA polymerase subunit alpha (314 aa).

Residues Met-1–Thr-228 form an alpha N-terminal domain (alpha-NTD) region. An alpha C-terminal domain (alpha-CTD) region spans residues Lys-245–Asp-314.

The protein belongs to the RNA polymerase alpha chain family. As to quaternary structure, homodimer. RNAP is composed of a core of 2 alpha, a beta and a beta' subunit. The core is associated with a delta subunit, and at least one of epsilon or omega. When a sigma factor is associated with the core the holoenzyme is formed, which can initiate transcription.

The enzyme catalyses RNA(n) + a ribonucleoside 5'-triphosphate = RNA(n+1) + diphosphate. Its function is as follows. DNA-dependent RNA polymerase catalyzes the transcription of DNA into RNA using the four ribonucleoside triphosphates as substrates. The sequence is that of DNA-directed RNA polymerase subunit alpha from Bacillus subtilis (strain 168).